Here is a 420-residue protein sequence, read N- to C-terminus: Serine hydroxymethyltransferase (420 aa).

(6S)-5,6,7,8-tetrahydrofolate is bound by residues L121 and 125–127; that span reads GHL. At K229 the chain carries N6-(pyridoxal phosphate)lysine.

It belongs to the SHMT family. Homodimer. Pyridoxal 5'-phosphate is required as a cofactor.

It is found in the cytoplasm. It carries out the reaction (6R)-5,10-methylene-5,6,7,8-tetrahydrofolate + glycine + H2O = (6S)-5,6,7,8-tetrahydrofolate + L-serine. It functions in the pathway one-carbon metabolism; tetrahydrofolate interconversion. The protein operates within amino-acid biosynthesis; glycine biosynthesis; glycine from L-serine: step 1/1. Functionally, catalyzes the reversible interconversion of serine and glycine with tetrahydrofolate (THF) serving as the one-carbon carrier. This reaction serves as the major source of one-carbon groups required for the biosynthesis of purines, thymidylate, methionine, and other important biomolecules. Also exhibits THF-independent aldolase activity toward beta-hydroxyamino acids, producing glycine and aldehydes, via a retro-aldol mechanism. In Wigglesworthia glossinidia brevipalpis, this protein is Serine hydroxymethyltransferase.